We begin with the raw amino-acid sequence, 489 residues long: Tripartite motif-containing protein 10 (489 aa).

The segment at 16-61 (CPICQGTLREPVTIDCGHNFCRGCLTRYCEIPGPESEESLSCPLCK) adopts an RING-type zinc-finger fold. The B box-type zinc-finger motif lies at 94 to 135 (EVEDACPEHGEKIYFFCEEDEAQLCVVCRETGQHGAHTVRFL). The Zn(2+) site is built by Cys-99, His-102, Cys-121, and His-127. Residues 144 to 180 (EQIQKCLVCLRKEREEIQETQSRENKRIQVLLTQVAT) adopt a coiled-coil conformation. Residues 292-486 (QEMKTFLEKL…FSLSCQEGAV (195 aa)) form the B30.2/SPRY domain.

The protein belongs to the TRIM/RBCC family. Interacts with IFNAR1; this interaction prevents association of IFNAR1 with TYK2. Expressed in embryonic liver.

It localises to the cytoplasm. E3 ligase that plays an essential role in the differentiation and survival of terminal erythroid cells. May directly bind to PTEN and promote its ubiquitination, resulting in its proteasomal degradation and activation of hypertrophic signaling. In addition, plays a role in immune response regulation by repressing the phosphorylation of STAT1 and STAT2 in the interferon/JAK/STAT signaling pathway independent of its E3 ligase activity. Mechanistically, interacts with the intracellular domain of IFNAR1 and thereby inhibits the association between TYK2 and IFNAR1. The polypeptide is Tripartite motif-containing protein 10 (Trim10) (Mus musculus (Mouse)).